Reading from the N-terminus, the 53-residue chain is MRLKKRFKKFFISRKEYEKIEEILDIGLAKAMEETKDDELLTYDEIKELLGDK.

As to quaternary structure, forms heterodimers with RelE and possibly a heterotetramer RelE3-RelB3(2)-RelE3 from 2 heterodimers. The heterotetramer is probably not very stable in solution.

Its function is as follows. Antitoxin component of a type II toxin-antitoxin (TA) system. Probably neutralizes the toxic activity of cognate toxin RelE. The sequence is that of Antitoxin RelB3 (relB3) from Methanocaldococcus jannaschii (strain ATCC 43067 / DSM 2661 / JAL-1 / JCM 10045 / NBRC 100440) (Methanococcus jannaschii).